We begin with the raw amino-acid sequence, 52 residues long: Large ribosomal subunit protein eL39 (52 aa).

It belongs to the eukaryotic ribosomal protein eL39 family.

The sequence is that of Large ribosomal subunit protein eL39 (RPL39) from Tetrahymena thermophila (strain SB210).